The sequence spans 134 residues: Ribonuclease VapC2 (134 aa).

The region spanning 3–124 is the PINc domain; it reads YMLDTNICVY…TNNIKEFKRI (122 aa). Asp6 is a Mg(2+) binding site.

Belongs to the PINc/VapC protein family. As to quaternary structure, forms complexes with VapB2; probably VapC2(4):VapB2(2) in the absence of DNA, and VapC2(4):VapB2(4) in the presence of DNA. Crystallizes as heterodimers with stoichiometry VapC2(4):VapB2(4) in the presence of its probable promoter DNA. The heterodimers are in contact via alternative VapC-VapC and VapB-VapB interactions. This subunit does not contact DNA. Mg(2+) serves as cofactor.

In terms of biological role, toxic component of a type II toxin-antitoxin (TA) system. Has ssRNase activity. Upon expression in E.coli or S.cerevisiae inhibits growth in liquid culture; in S.cerevisiae its expression leads to apoptosis-like characteristics. Rapidly induces apoptosis (within 2 hours) upon microinjection into mouse fibroblasts (L929 line); pretreatment of cells with dexamethasone protects them. Probably contributes to host cell death if bacterial cell lysis occurs during host infection. Its toxic effect is neutralized by coexpression with cognate antitoxin VapB2, its RNase activity is partially inhibited in vitro by VapB2. In Rickettsia felis (strain ATCC VR-1525 / URRWXCal2) (Rickettsia azadi), this protein is Ribonuclease VapC2.